Here is a 466-residue protein sequence, read N- to C-terminus: Amidase (466 aa).

Active-site charge relay system residues include Lys79 and Ser148. A disordered region spans residues 128–152; it reads YGRITPKSRNPRDPGRTPGGSSGGS. Residue Ser172 is the Acyl-ester intermediate of the active site.

The protein belongs to the amidase family.

The catalysed reaction is a monocarboxylic acid amide + H2O = a monocarboxylate + NH4(+). This is Amidase from Pseudomonas putida (Arthrobacter siderocapsulatus).